Reading from the N-terminus, the 244-residue chain is tRNA pseudouridine synthase B (244 aa).

Catalysis depends on Asp46, which acts as the Nucleophile.

This sequence belongs to the pseudouridine synthase TruB family. Type 1 subfamily.

It catalyses the reaction uridine(55) in tRNA = pseudouridine(55) in tRNA. Responsible for synthesis of pseudouridine from uracil-55 in the psi GC loop of transfer RNAs. The chain is tRNA pseudouridine synthase B from Bordetella parapertussis (strain 12822 / ATCC BAA-587 / NCTC 13253).